The primary structure comprises 333 residues: Syntaxin-4 (333 aa).

Residues 1–312 are Cytoplasmic-facing; it reads MGKDRLPELL…QHQKKARKKK (312 aa). Over residues 50–66 the composition is skewed to low complexity; sequence YSVVSQNSHSCSNNNSS. The interval 50–81 is disordered; sequence YSVVSQNSHSCSNNNSSTEPKDRSSSKMTQYG. Positions 91–116 form a coiled coil; it reads YTEIRQQLAQIAANLETMNRMAQTVN. The 63-residue stretch at 239 to 301 folds into the t-SNARE coiled-coil homology domain; it reads LREMMDRFNE…DKGADELDQA (63 aa). The chain crosses the membrane as a helical; Anchor for type IV membrane protein span at residues 313–333; that stretch reads IMLIVILAAVLLVLLLVGIYL.

It belongs to the syntaxin family.

Its subcellular location is the membrane. In terms of biological role, potentially involved in docking of synaptic vesicles at presynaptic active zones. The polypeptide is Syntaxin-4 (Drosophila melanogaster (Fruit fly)).